Reading from the N-terminus, the 416-residue chain is MNTPFFISWRYQRGKQKNPLVALIAKFSAIGIALGVAVLIVGLSAMNGFERELNQRILAVVPHAEILSAPNATEPTIHHWQNLEKRLQQNPQIKGISPFVSFTALVENGSKLKVVQVKGVEKQAEDKVSSIGNFVQEQGWNKFEKEGGLVLGSGIAKELDVKVGDWITLLISQQNGDEQFAQPTREPVQVTSILRLDGQLDYSYALLPLAQAQTFLTYQPDQITGVELKLDDPFSARNLDLSMLNDYPQMLYMQNWISKFGYMYRDIQLIRTVMYIAMVLVIGVACFNIVSTLIMAVKDKQGDIAIMRTLGANNAFIKRIFIWYGLQAGMKGCLIGIVLGIILALNLTTFIQGIEWVIGKKLLSGDVYFVDFLPSELHWLDVLMVLVAALALSLMASLYPASRAAKLQPAQVLSSH.

Transmembrane regions (helical) follow at residues V21–V41, I276–A296, L334–I354, and W379–Y399.

It belongs to the ABC-4 integral membrane protein family. LolC/E subfamily.

It localises to the cell inner membrane. Its function is as follows. Part of an ATP-dependent transport system LolCDE responsible for the release of lipoproteins targeted to the outer membrane from the inner membrane. Such a release is dependent of the sorting-signal (absence of an Asp at position 2 of the mature lipoprotein) and of LolA. The protein is Lipoprotein-releasing system transmembrane protein LolE (lolE) of Haemophilus influenzae (strain ATCC 51907 / DSM 11121 / KW20 / Rd).